A 305-amino-acid chain; its full sequence is Transcription factor MYB87 (305 aa).

2 HTH myb-type domains span residues 9–66 and 67–117; these read KMAV…RPNL and KHGG…KKKL. 2 consecutive DNA-binding regions (H-T-H motif) follow at residues 38–62 and 90–113; these read WISL…LNYL and WSII…NTRL.

In terms of tissue distribution, expressed in roots, leaves, internodes, shoot tips and flowers.

Its subcellular location is the nucleus. Functionally, transcription factor that functions as a regulator of genes affecting cell wall organization and remodeling. Activates genes related to the primary cell wall and represses genes related to the secondary cell wall and expansins. Required for the regulation of longitudinal cell growth in stems, leaves, petioles, roots, flowers and siliques. In Arabidopsis thaliana (Mouse-ear cress), this protein is Transcription factor MYB87.